The primary structure comprises 123 residues: UPF0102 protein VSAL_I2655 (123 aa).

This sequence belongs to the UPF0102 family.

This is UPF0102 protein VSAL_I2655 from Aliivibrio salmonicida (strain LFI1238) (Vibrio salmonicida (strain LFI1238)).